Here is a 137-residue protein sequence, read N- to C-terminus: Large ribosomal subunit protein uL16 (137 aa).

This sequence belongs to the universal ribosomal protein uL16 family. In terms of assembly, part of the 50S ribosomal subunit.

Its function is as follows. Binds 23S rRNA and is also seen to make contacts with the A and possibly P site tRNAs. The chain is Large ribosomal subunit protein uL16 from Hydrogenovibrio crunogenus (strain DSM 25203 / XCL-2) (Thiomicrospira crunogena).